The sequence spans 211 residues: Large ribosomal subunit protein uL3 (211 aa).

At Q150 the chain carries N5-methylglutamine.

It belongs to the universal ribosomal protein uL3 family. Part of the 50S ribosomal subunit. Forms a cluster with proteins L14 and L19. Post-translationally, methylated by PrmB.

In terms of biological role, one of the primary rRNA binding proteins, it binds directly near the 3'-end of the 23S rRNA, where it nucleates assembly of the 50S subunit. The polypeptide is Large ribosomal subunit protein uL3 (Pseudomonas savastanoi pv. phaseolicola (strain 1448A / Race 6) (Pseudomonas syringae pv. phaseolicola (strain 1448A / Race 6))).